Reading from the N-terminus, the 175-residue chain is NADH-ubiquinone oxidoreductase chain 6 (175 aa).

5 helical membrane passes run 1–21, 26–46, 47–67, 87–107, and 152–172; these read MMYMVFLLSVAFVISFIGFSS, IYGGLGLIVGGGVGCGIVMGL, GGSFLGLMVFLVYLGGMLVVF, VILSALFVGLLVEVAMIVWMI, and WLVILAGWSLFVSIFIVIEIT.

Belongs to the complex I subunit 6 family.

The protein localises to the mitochondrion membrane. It catalyses the reaction a ubiquinone + NADH + 5 H(+)(in) = a ubiquinol + NAD(+) + 4 H(+)(out). Its function is as follows. Core subunit of the mitochondrial membrane respiratory chain NADH dehydrogenase (Complex I) that is believed to belong to the minimal assembly required for catalysis. Complex I functions in the transfer of electrons from NADH to the respiratory chain. The immediate electron acceptor for the enzyme is believed to be ubiquinone. The polypeptide is NADH-ubiquinone oxidoreductase chain 6 (MT-ND6) (Dasypus novemcinctus (Nine-banded armadillo)).